The primary structure comprises 302 residues: Cuticle collagen dpy-13 (302 aa).

3 triple-helical region regions span residues 106–135 (GPQGAPGAPGKPGRPGKPGAPGFPGNPGKA), 154–210 (GPPG…EGLP), and 219–278 (GEPG…PGTP). Positions 108 to 284 (QGAPGAPGKP…PGTPGERGIC (177 aa)) are disordered. The segment covering 144–159 (TPPPCKPCPQGPPGAP) has biased composition (pro residues). Over residues 188–197 (PKGPNGAPGK) the composition is skewed to low complexity. 2 stretches are compositionally biased toward pro residues: residues 247–257 (QPGPKGPPGPD) and 268–277 (QPGPVGPPGT).

It belongs to the cuticular collagen family. Collagen polypeptide chains are complexed within the cuticle by disulfide bonds and other types of covalent cross-links.

Nematode cuticles are composed largely of collagen-like proteins. The cuticle functions both as an exoskeleton and as a barrier to protect the worm from its environment. Mutations in dpy-13 affects the body shape. The protein is Cuticle collagen dpy-13 (dpy-13) of Caenorhabditis elegans.